Reading from the N-terminus, the 298-residue chain is Acetylglutamate kinase (298 aa).

Residues 61 to 62 (GG), Arg83, and Asn188 each bind substrate.

It belongs to the acetylglutamate kinase family. ArgB subfamily.

It localises to the cytoplasm. It catalyses the reaction N-acetyl-L-glutamate + ATP = N-acetyl-L-glutamyl 5-phosphate + ADP. Its pathway is amino-acid biosynthesis; L-arginine biosynthesis; N(2)-acetyl-L-ornithine from L-glutamate: step 2/4. Functionally, catalyzes the ATP-dependent phosphorylation of N-acetyl-L-glutamate. The chain is Acetylglutamate kinase from Syntrophobacter fumaroxidans (strain DSM 10017 / MPOB).